A 165-amino-acid polypeptide reads, in one-letter code: Chorismate pyruvate-lyase (165 aa).

Residues Met35, Arg77, Leu115, and Glu156 each coordinate substrate.

It belongs to the UbiC family. Monomer.

Its subcellular location is the cytoplasm. The catalysed reaction is chorismate = 4-hydroxybenzoate + pyruvate. It participates in cofactor biosynthesis; ubiquinone biosynthesis. In terms of biological role, removes the pyruvyl group from chorismate, with concomitant aromatization of the ring, to provide 4-hydroxybenzoate (4HB) for the ubiquinone pathway. In Enterobacter sp. (strain 638), this protein is Chorismate pyruvate-lyase.